We begin with the raw amino-acid sequence, 376 residues long: MSAESCFGSSGDQSSSKGVATHGGSYVQYNVYGNLFEVSRKYVPPLRPIGRGAYGIVCAATNSETGEEVAIKKIGNAFDNIIDAKRTLREIKLLKHMDHENVIAVKDIIKPPQRENFNDVYIVYELMDTDLHQIIRSNQPLTDDHCRFFLYQLLRGLKYVHSANVLHRDLKPSNLLLNANCDLKLGDFGLARTKSETDFMTEYVVTRWYRAPELLLNCSEYTAAIDIWSVGCILGETMTREPLFPGKDYVHQLRLITELIGSPDDSSLGFLRSDNARRYVRQLPQYPRQNFAARFPNMSAGAVDLLEKMLVFDPSRRITVDEALCHPYLAPLHDINEEPVCVRPFNFDFEQPTLTEENIKELIYRETVKFNPQDSV.

Residues 43–329 (VPPLRPIGRG…VDEALCHPYL (287 aa)) enclose the Protein kinase domain. Residues 49-57 (IGRGAYGIV) and Lys72 contribute to the ATP site. Catalysis depends on Asp169, which acts as the Proton acceptor. Phosphothreonine is present on Thr201. A TXY motif is present at residues 201 to 203 (TEY). Phosphotyrosine is present on Tyr203.

This sequence belongs to the protein kinase superfamily. CMGC Ser/Thr protein kinase family. MAP kinase subfamily. Interacts with MEKK1, MKK1, MKK2 and MKK6. May form a ternary complex composed of MEKK1 and MKK1/MKK2 and MPK4. Interacts with MKS1 and AP2C1. May form a ternary or larger complex with MKS1 and WRKY25 and/or WRKY33. Interacts with MAP65-1. No interactions with RACK1A, RACK1B or RACK1C. Interacts directly with ASR3 and mediates its phosphorylation. Binds to MEKK2. Interacts with PAT1. Binds to HT1. Dually phosphorylated on Thr-201 and Tyr-203, which activates the enzyme. Autophosphorylated on serine and tyrosine residues. Dephosphorylated by DSPTP1. Phosphorylated by MKK6 in vitro. In terms of tissue distribution, ubiquitous. Expressed in the veins and stomatal guard cells of leaf plates, petioles, stem, roots and flowers.

The protein resides in the cytoplasm. It is found in the nucleus. Its subcellular location is the cytoskeleton. The enzyme catalyses L-seryl-[protein] + ATP = O-phospho-L-seryl-[protein] + ADP + H(+). It carries out the reaction L-threonyl-[protein] + ATP = O-phospho-L-threonyl-[protein] + ADP + H(+). Activated by threonine and tyrosine phosphorylation. Activated by the MAP kinase kinases MKK1 and MKK2. Activated in response to touch, wounding, low temperature, low humidity, salt stress and the bacterial elicitors flagellin and harpin. Activated upon Pseudomonas syringae pv. tomato DC3000 infection. Repressed by the protein phosphatase 2C AP2C1. Repressed by DSPTP1-mediated dephosphorylation. Activated by the MAP kinase kinase MKK6 in vitro. The ANPs-MKK6-MPK4 module is involved in the regulation of plant cytokinesis during meiosis and mitosis. Essential to promote the progression of cytokinesis and for cellularization (formation of the cell plate) during male-specific meiosis. Involved in cortical microtubules organization and stabilization by regulating the phosphorylation state of microtubule-associated proteins such as MAP65-1. Involved in root hair development process. Negative regulator of systemic acquired resistance (SAR) and salicylic acid- (SA) mediated defense response. Required for jasmonic acid- (JA) mediated defense gene expression. May regulate activity of transcription factor controlling pathogenesis-related (PR) gene expression. Seems to act independently of the SAR regulatory protein NPR1 (Nonexpresser of PR1). Phosphorylates MKS1 and transcription factors WRKY25 and WRKY33. The MEKK1, MKK1/MKK2 and MPK4 function in a signaling pathway that modulates the expression of genes responding to biotic and abiotic stresses and also plays an important role in pathogen defense by negatively regulating innate immunity. Phosphorylates MEKK2 upon treatment with flg22. Involved in stomatal movement regulation by repressing HT1 and HT1-mediated GHR1 phosphorylation. This chain is Mitogen-activated protein kinase 4, found in Arabidopsis thaliana (Mouse-ear cress).